Consider the following 357-residue polypeptide: Glutamate 5-kinase (357 aa).

Lys7 contacts ATP. Substrate contacts are provided by Ser43, Asp130, and Asn142. Residues 162 to 163 (TD) and 205 to 211 (TGGMTTK) each bind ATP. One can recognise a PUA domain in the interval 270-341 (EGELCLDQGA…QALSVVTDAE (72 aa)).

It belongs to the glutamate 5-kinase family.

Its subcellular location is the cytoplasm. The catalysed reaction is L-glutamate + ATP = L-glutamyl 5-phosphate + ADP. The protein operates within amino-acid biosynthesis; L-proline biosynthesis; L-glutamate 5-semialdehyde from L-glutamate: step 1/2. In terms of biological role, catalyzes the transfer of a phosphate group to glutamate to form L-glutamate 5-phosphate. The chain is Glutamate 5-kinase from Synechococcus sp. (strain CC9902).